A 573-amino-acid chain; its full sequence is Dihydroxy-acid dehydratase (573 aa).

Cysteine 62 is a [2Fe-2S] cluster binding site. Aspartate 94 lines the Mg(2+) pocket. Cysteine 135 contributes to the [2Fe-2S] cluster binding site. The Mg(2+) site is built by aspartate 136 and lysine 137. Lysine 137 carries the N6-carboxylysine modification. [2Fe-2S] cluster is bound at residue cysteine 212. Position 463 (glutamate 463) interacts with Mg(2+). Catalysis depends on serine 489, which acts as the Proton acceptor.

Belongs to the IlvD/Edd family. In terms of assembly, homodimer. It depends on [2Fe-2S] cluster as a cofactor. The cofactor is Mg(2+).

The enzyme catalyses (2R)-2,3-dihydroxy-3-methylbutanoate = 3-methyl-2-oxobutanoate + H2O. The catalysed reaction is (2R,3R)-2,3-dihydroxy-3-methylpentanoate = (S)-3-methyl-2-oxopentanoate + H2O. The protein operates within amino-acid biosynthesis; L-isoleucine biosynthesis; L-isoleucine from 2-oxobutanoate: step 3/4. It participates in amino-acid biosynthesis; L-valine biosynthesis; L-valine from pyruvate: step 3/4. Functions in the biosynthesis of branched-chain amino acids. Catalyzes the dehydration of (2R,3R)-2,3-dihydroxy-3-methylpentanoate (2,3-dihydroxy-3-methylvalerate) into 2-oxo-3-methylpentanoate (2-oxo-3-methylvalerate) and of (2R)-2,3-dihydroxy-3-methylbutanoate (2,3-dihydroxyisovalerate) into 2-oxo-3-methylbutanoate (2-oxoisovalerate), the penultimate precursor to L-isoleucine and L-valine, respectively. The protein is Dihydroxy-acid dehydratase of Arthrobacter sp. (strain FB24).